The chain runs to 481 residues: Cytochrome P450 monooygenase 2 (481 aa).

Residues 12 to 32 form a helical membrane-spanning segment; sequence GSQLLPFYIAIFVFTLVPWAI. C418 is a heme binding site.

This sequence belongs to the cytochrome P450 family. Heme serves as cofactor.

The protein resides in the membrane. It functions in the pathway plant hormone biosynthesis; gibberellin biosynthesis. Its function is as follows. Gibberellin 20-oxidase; part of the gene cluster that mediates the biosynthesis of gibberellins (GAs), diterpenoids that may provide a selective advantage during infection of the preferred host plant, rice. Gibberellins (GAs) are diterpenoids and are synthesized via the mevalonate pathway. Biosynthesis of the major metabolite GA3 (gibberellic acid) from geranylgeranyl diphosphate (GGPP) requires 13 steps. The GGPP produced by the geranylgeranyl diphosphate synthase GGS2 is converted to ent-kaurene via ent-copalyldiphosphate in a two-step cyclization reaction performed by the bifunctional ent-copalyl diphosphate synthase/ent-kaurene synthase enzyme (CPS/KS). Ent-Kaurene is metabolized to GAs by a series of oxidation reactions catalyzed by cytochrome P450 monooxygenases. Cytochrome P450 monooxygenase P450-4 is an ent-kaurene oxidase that catalyzes the three oxidation steps between ent-kaurene and ent-kaurenoic acid. The highly multifunctional cytochrome P450 monooxygenase P450-1 then catalyzes four steps involving oxidation at two carbon atoms, in the main pathway from ent-kaurenoic acid to GA14 via GA12-aldehyde as well as producing kaurenolides and fujenoic acids as by-products. The cytochrome P450 monooxygenase P450-2 then converts GA14 to GA4 by removal of C-20. GA4 is further converted to GA7 by the GA4 desaturase DES via 1,2-desaturation before cytochrome P450 monooxygenase P450-3, a 13-hydroxylase, hydroxylates GA7 to GA3, the final product of the GA-biosynthetic pathway. The protein is Cytochrome P450 monooygenase 2 of Gibberella fujikuroi (strain CBS 195.34 / IMI 58289 / NRRL A-6831) (Bakanae and foot rot disease fungus).